The primary structure comprises 404 residues: Cysteine desulfurase IscS (404 aa).

Pyridoxal 5'-phosphate is bound by residues 75–76, Asn-155, Gln-183, and 203–205; these read AT and SGH. Lys-206 is subject to N6-(pyridoxal phosphate)lysine. Residue Thr-243 coordinates pyridoxal 5'-phosphate. Residue Cys-328 is the Cysteine persulfide intermediate of the active site. Cys-328 serves as a coordination point for [2Fe-2S] cluster.

The protein belongs to the class-V pyridoxal-phosphate-dependent aminotransferase family. NifS/IscS subfamily. In terms of assembly, homodimer. Forms a heterotetramer with IscU, interacts with other sulfur acceptors. The cofactor is pyridoxal 5'-phosphate.

The protein resides in the cytoplasm. It carries out the reaction (sulfur carrier)-H + L-cysteine = (sulfur carrier)-SH + L-alanine. The protein operates within cofactor biosynthesis; iron-sulfur cluster biosynthesis. Functionally, master enzyme that delivers sulfur to a number of partners involved in Fe-S cluster assembly, tRNA modification or cofactor biosynthesis. Catalyzes the removal of elemental sulfur atoms from cysteine to produce alanine. Functions as a sulfur delivery protein for Fe-S cluster synthesis onto IscU, an Fe-S scaffold assembly protein, as well as other S acceptor proteins. This Shewanella halifaxensis (strain HAW-EB4) protein is Cysteine desulfurase IscS.